The primary structure comprises 213 residues: Urease accessory protein UreG (213 aa).

12-19 (GPVGSGKT) is a binding site for GTP.

It belongs to the SIMIBI class G3E GTPase family. UreG subfamily. In terms of assembly, homodimer. UreD, UreF and UreG form a complex that acts as a GTP-hydrolysis-dependent molecular chaperone, activating the urease apoprotein by helping to assemble the nickel containing metallocenter of UreC. The UreE protein probably delivers the nickel.

It localises to the cytoplasm. Functionally, facilitates the functional incorporation of the urease nickel metallocenter. This process requires GTP hydrolysis, probably effectuated by UreG. The chain is Urease accessory protein UreG from Marinomonas sp. (strain MWYL1).